We begin with the raw amino-acid sequence, 333 residues long: Malate dehydrogenase (333 aa).

NAD(+) contacts are provided by residues 10–15 and Asp-34; that span reads GGGQIG. Arg-83 and Arg-89 together coordinate substrate. NAD(+)-binding positions include Asn-96 and 119-121; that span reads ITN. Substrate contacts are provided by Asn-121 and Arg-152. Residue His-176 is the Proton acceptor of the active site.

This sequence belongs to the LDH/MDH superfamily. MDH type 3 family.

The enzyme catalyses (S)-malate + NAD(+) = oxaloacetate + NADH + H(+). Its function is as follows. Catalyzes the reversible oxidation of malate to oxaloacetate. The chain is Malate dehydrogenase from Parvibaculum lavamentivorans (strain DS-1 / DSM 13023 / NCIMB 13966).